Here is a 238-residue protein sequence, read N- to C-terminus: Uridylate kinase (238 aa).

Position 11 to 14 (11 to 14) interacts with ATP; that stretch reads KLSG. Residue Gly-52 participates in UMP binding. ATP-binding residues include Gly-53 and Arg-57. Residues Asp-72 and 134–141 each bind UMP; that span reads TGFSYFTT. Residues Asn-162, Tyr-168, and Asp-171 each coordinate ATP.

It belongs to the UMP kinase family. Homohexamer.

It localises to the cytoplasm. It catalyses the reaction UMP + ATP = UDP + ADP. Its pathway is pyrimidine metabolism; CTP biosynthesis via de novo pathway; UDP from UMP (UMPK route): step 1/1. With respect to regulation, inhibited by UTP. Its function is as follows. Catalyzes the reversible phosphorylation of UMP to UDP. This is Uridylate kinase from Mesoplasma florum (strain ATCC 33453 / NBRC 100688 / NCTC 11704 / L1) (Acholeplasma florum).